The primary structure comprises 910 residues: DNA mismatch repair protein MutS (910 aa).

Gly658–Ser665 contacts ATP.

This sequence belongs to the DNA mismatch repair MutS family.

Functionally, this protein is involved in the repair of mismatches in DNA. It is possible that it carries out the mismatch recognition step. This protein has a weak ATPase activity. The sequence is that of DNA mismatch repair protein MutS from Brucella anthropi (strain ATCC 49188 / DSM 6882 / CCUG 24695 / JCM 21032 / LMG 3331 / NBRC 15819 / NCTC 12168 / Alc 37) (Ochrobactrum anthropi).